The primary structure comprises 422 residues: Phosphoribosylamine--glycine ligase (422 aa).

An ATP-grasp domain is found at 107–314 (KAFMQRHGIP…LFDVLDRAID (208 aa)). Residue 133 to 194 (VDREGAPIVI…EEFLAGEEAS (62 aa)) participates in ATP binding. Glutamate 284 and asparagine 286 together coordinate Mg(2+).

This sequence belongs to the GARS family. Mg(2+) is required as a cofactor. Mn(2+) serves as cofactor.

It carries out the reaction 5-phospho-beta-D-ribosylamine + glycine + ATP = N(1)-(5-phospho-beta-D-ribosyl)glycinamide + ADP + phosphate + H(+). Its pathway is purine metabolism; IMP biosynthesis via de novo pathway; N(1)-(5-phospho-D-ribosyl)glycinamide from 5-phospho-alpha-D-ribose 1-diphosphate: step 2/2. This chain is Phosphoribosylamine--glycine ligase, found in Ralstonia nicotianae (strain ATCC BAA-1114 / GMI1000) (Ralstonia solanacearum).